Consider the following 183-residue polypeptide: uncharacterized protein (183 aa).

3 disordered regions span residues 1–44, 68–137, and 163–183; these read MPFY…VMTA, GRAG…LGLR, and RDDP…VWPE.

This is an uncharacterized protein from Dryophytes versicolor (chameleon treefrog).